A 548-amino-acid chain; its full sequence is Probable malate:quinone oxidoreductase (548 aa).

This sequence belongs to the MQO family. FAD is required as a cofactor.

It carries out the reaction (S)-malate + a quinone = a quinol + oxaloacetate. It functions in the pathway carbohydrate metabolism; tricarboxylic acid cycle; oxaloacetate from (S)-malate (quinone route): step 1/1. This Escherichia coli O6:H1 (strain CFT073 / ATCC 700928 / UPEC) protein is Probable malate:quinone oxidoreductase.